Consider the following 77-residue polypeptide: ATP synthase subunit c (77 aa).

Helical transmembrane passes span 7–27 (AFKYLAASIAAGLAALAAALG) and 57–77 (VGLIEAVPILAIVVAFLILFL).

Belongs to the ATPase C chain family. As to quaternary structure, F-type ATPases have 2 components, F(1) - the catalytic core - and F(0) - the membrane proton channel. F(1) has five subunits: alpha(3), beta(3), gamma(1), delta(1), epsilon(1). F(0) has three main subunits: a(1), b(2) and c(10-14). The alpha and beta chains form an alternating ring which encloses part of the gamma chain. F(1) is attached to F(0) by a central stalk formed by the gamma and epsilon chains, while a peripheral stalk is formed by the delta and b chains.

The protein resides in the cell membrane. Its function is as follows. F(1)F(0) ATP synthase produces ATP from ADP in the presence of a proton or sodium gradient. F-type ATPases consist of two structural domains, F(1) containing the extramembraneous catalytic core and F(0) containing the membrane proton channel, linked together by a central stalk and a peripheral stalk. During catalysis, ATP synthesis in the catalytic domain of F(1) is coupled via a rotary mechanism of the central stalk subunits to proton translocation. Functionally, key component of the F(0) channel; it plays a direct role in translocation across the membrane. A homomeric c-ring of between 10-14 subunits forms the central stalk rotor element with the F(1) delta and epsilon subunits. The chain is ATP synthase subunit c from Lactobacillus helveticus (strain DPC 4571).